A 550-amino-acid chain; its full sequence is Hydroxylamine reductase (550 aa).

[2Fe-2S] cluster-binding residues include Cys3, Cys6, Cys18, and Cys25. Hybrid [4Fe-2O-2S] cluster-binding residues include His249, Glu273, Cys317, Cys405, Cys433, Cys458, Glu492, and Lys494. Cys405 carries the post-translational modification Cysteine persulfide.

The protein belongs to the HCP family. It depends on [2Fe-2S] cluster as a cofactor. Hybrid [4Fe-2O-2S] cluster serves as cofactor.

It is found in the cytoplasm. It catalyses the reaction A + NH4(+) + H2O = hydroxylamine + AH2 + H(+). In terms of biological role, catalyzes the reduction of hydroxylamine to form NH(3) and H(2)O. The chain is Hydroxylamine reductase from Escherichia coli (strain SE11).